We begin with the raw amino-acid sequence, 100 residues long: U-myrmeciitoxin(01)-Mg7b (100 aa).

The N-terminal stretch at 1 to 17 (MKLSCLSLALAIILVLA) is a signal peptide. The propeptide occupies 18–50 (IVYSPHMEVKALADAEPDAIGFADAFGEADAEP). The O-linked (GalNAc...) serine glycan is linked to Ser85. O-linked (GalNAc...) threonine glycans are attached at residues Thr94 and Thr95.

Belongs to the formicidae venom precursor-01 superfamily. Post-translationally, glycosylation is critical to maintaining the aqueous solubility of this protein, but does not directly contribute to its activity. As to expression, expressed by the venom gland.

It is found in the secreted. The protein resides in the target cell membrane. Its function is as follows. Neurotoxin that triggers pain behavior and inflammation in mammals, and is paralytic and lethal to insects. Causes a time-dependent increase in cell leak current. May act by targeting membranes. The protein is U-myrmeciitoxin(01)-Mg7b of Myrmecia gulosa (Red bulldog ant).